Here is a 109-residue protein sequence, read N- to C-terminus: Tetraspanin-31 (109 aa).

At 1–12 (MVCGGFACSKNA) the chain is on the cytoplasmic side. Residues 13-33 (LCALNVVYMLVGLLLIGVAAW) traverse the membrane as a helical segment. The Extracellular portion of the chain corresponds to 34–44 (AKGLGLVSSIH). A helical transmembrane segment spans residues 45-65 (IIGGVIAVGVFLLLIAVAGLV). The Cytoplasmic portion of the chain corresponds to 66 to 72 (GAVNHHQ). A helical transmembrane segment spans residues 73-93 (VLLFFYMIILGLVFIFQFGIS). The Extracellular portion of the chain corresponds to 94–109 (CSCLAINLSKQAGIIN). N100 carries N-linked (GlcNAc...) asparagine glycosylation.

It belongs to the tetraspanin (TM4SF) family.

Its subcellular location is the membrane. The protein is Tetraspanin-31 (TSPAN31) of Sus scrofa (Pig).